The following is a 196-amino-acid chain: Small ribosomal subunit protein uS4c (196 aa).

Residues 16–36 (GALPGLTRKTPKSGSNLKKKF) form a disordered region. Positions 89–169 (MRLDNILFRL…LPKHLTIDTL (81 aa)) constitute an S4 RNA-binding domain.

The protein belongs to the universal ribosomal protein uS4 family. As to quaternary structure, part of the 30S ribosomal subunit. Contacts protein S5. The interaction surface between S4 and S5 is involved in control of translational fidelity.

Its subcellular location is the plastid. It localises to the chloroplast. In terms of biological role, one of the primary rRNA binding proteins, it binds directly to 16S rRNA where it nucleates assembly of the body of the 30S subunit. Its function is as follows. With S5 and S12 plays an important role in translational accuracy. This is Small ribosomal subunit protein uS4c (rps4) from Cinna latifolia (Drooping woodreed).